Consider the following 193-residue polypeptide: MADILLLDNVDSFTYNLVDQLRASGHQVVIYRNQIGAEVIIERLQHMEQPVLMLSPGPGTPSEAGCMPELLQRLRGQLPIIGICLGHQAIVEAYGGQVGQAGEILHGKASAIAHDGEGMFAGMANPLPVARYHSLVGSNIPADLTVNARSGEMVMAVRDDRRRVCGFQFHPESILTTHGARLLEQTLAWALAK.

A Glutamine amidotransferase type-1 domain is found at 3–193; sequence DILLLDNVDS…EQTLAWALAK (191 aa). Residue 57–59 participates in L-glutamine binding; the sequence is GPG. Cys84 acts as the Nucleophile; for GATase activity in catalysis. L-glutamine is bound by residues Gln88 and 134–135; that span reads SL. Residues His170 and Glu172 each act as for GATase activity in the active site.

Heterotetramer consisting of two non-identical subunits: a beta subunit (TrpG) and a large alpha subunit (TrpE).

It carries out the reaction chorismate + L-glutamine = anthranilate + pyruvate + L-glutamate + H(+). It participates in amino-acid biosynthesis; L-tryptophan biosynthesis; L-tryptophan from chorismate: step 1/5. Part of a heterotetrameric complex that catalyzes the two-step biosynthesis of anthranilate, an intermediate in the biosynthesis of L-tryptophan. In the first step, the glutamine-binding beta subunit (TrpG) of anthranilate synthase (AS) provides the glutamine amidotransferase activity which generates ammonia as a substrate that, along with chorismate, is used in the second step, catalyzed by the large alpha subunit of AS (TrpE) to produce anthranilate. In the absence of TrpG, TrpE can synthesize anthranilate directly from chorismate and high concentrations of ammonia. This chain is Anthranilate synthase component 2 (trpG), found in Serratia marcescens.